Consider the following 391-residue polypeptide: Processive diacylglycerol beta-glucosyltransferase (391 aa).

It belongs to the glycosyltransferase 28 family. UgtP subfamily.

It is found in the cell membrane. The catalysed reaction is a 1,2-diacyl-3-O-(beta-D-glucopyranosyl)-sn-glycerol + UDP-alpha-D-glucose = a 1,2-diacyl-3-O-(beta-D-Glc-(1-&gt;6)-beta-D-Glc)-sn-glycerol + UDP + H(+). The enzyme catalyses a 1,2-diacyl-sn-glycerol + UDP-alpha-D-glucose = a 1,2-diacyl-3-O-(beta-D-glucopyranosyl)-sn-glycerol + UDP + H(+). It functions in the pathway glycolipid metabolism; diglucosyl-diacylglycerol biosynthesis. Processive glucosyltransferase involved in the biosynthesis of both the bilayer- and non-bilayer-forming membrane glucolipids. Is able to successively transfer two glucosyl residues to diacylglycerol (DAG), thereby catalyzing the formation of beta-monoglucosyl-DAG (3-O-(beta-D-glucopyranosyl)-1,2-diacyl-sn-glycerol) and beta-diglucosyl-DAG (3-O-(beta-D-glucopyranosyl-beta-(1-&gt;6)-D-glucopyranosyl)-1,2-diacyl-sn-glycerol). Beta-diglucosyl-DAG is the predominant glycolipid found in Bacillales and is also used as a membrane anchor for lipoteichoic acid (LTA). In Staphylococcus haemolyticus (strain JCSC1435), this protein is Processive diacylglycerol beta-glucosyltransferase.